The primary structure comprises 98 residues: Serine protease inhibitor Kazal-type 14 (98 aa).

The signal sequence occupies residues 1–23; that stretch reads MVKYFQVLWSLLFSIMLHSMLLA. Residues 35-98 form the Kazal-like domain; that stretch reads GLIKIKCPYK…QIRYYHTGRC (64 aa). Intrachain disulfides connect Cys-41-Cys-80, Cys-58-Cys-77, and Cys-66-Cys-98. Asn-52 carries an N-linked (GlcNAc...) asparagine glycan.

It is found in the secreted. In terms of biological role, may be a serine protease inhibitor. This chain is Serine protease inhibitor Kazal-type 14 (Spink14), found in Rattus norvegicus (Rat).